Here is a 362-residue protein sequence, read N- to C-terminus: Chorismate synthase (362 aa).

NADP(+) is bound at residue Arg47. FMN contacts are provided by residues 124–126, Gly286, 301–305, and Arg327; these read RAS and KPTAT.

It belongs to the chorismate synthase family. As to quaternary structure, homotetramer. Requires FMNH2 as cofactor.

The catalysed reaction is 5-O-(1-carboxyvinyl)-3-phosphoshikimate = chorismate + phosphate. It participates in metabolic intermediate biosynthesis; chorismate biosynthesis; chorismate from D-erythrose 4-phosphate and phosphoenolpyruvate: step 7/7. Its function is as follows. Catalyzes the anti-1,4-elimination of the C-3 phosphate and the C-6 proR hydrogen from 5-enolpyruvylshikimate-3-phosphate (EPSP) to yield chorismate, which is the branch point compound that serves as the starting substrate for the three terminal pathways of aromatic amino acid biosynthesis. This reaction introduces a second double bond into the aromatic ring system. The polypeptide is Chorismate synthase (Prochlorococcus marinus (strain MIT 9303)).